The following is a 525-amino-acid chain: MDKILILDFGSQVTQLIARRVREAHVYCELHSFDMPIEEIQAFAPKAIILSGGPNSVYESDYQADPKLFELGVPVLGICYGMQFMAQTLGGKVESGDKREFGYAQIKARHHSKLLEGLQDQIDDAGNGFLDVWMSHGDKVTQLPAGFQVIAETPSCPYAAMADEARGFYGVQFHPEVTHTKRGTEMIHRFVLHVAGCKPSWTMPNYIDEAVKKIREQVGDEEVILGLSGGVDSSVAAALIHRAIGDQLTCVFVDHGLLRLNEGKMVMEMFAQNLGVKVVHVQAEADFMAKLAGETDPEKKRKIIGAEFIEVFDRESGKLTNAKWLAQGTIYPDVIESAGAKTKKAHTIKSHHNVGGLPEDMNLKLLEPLRELFKDEVRQLGVALGLPHDMVYRHPFPGPGLGVRILGEVKKEYADLLRQADAIFIEELRNTVDEKTGKNWYELTSQAFAVFLPVKSVGVMGDGRTYDYVVALRAVVTSDFMTAHWAELPYSLLGRASNRIINEVRGINRVVYDVSGKPPATIEWE.

The 198-residue stretch at 3 to 200 (KILILDFGSQ…VLHVAGCKPS (198 aa)) folds into the Glutamine amidotransferase type-1 domain. The active-site Nucleophile is Cys79. Residues His174 and Glu176 contribute to the active site. In terms of domain architecture, GMPS ATP-PPase spans 201–393 (WTMPNYIDEA…LGLPHDMVYR (193 aa)). 228-234 (SGGVDSS) contacts ATP.

Homodimer.

It carries out the reaction XMP + L-glutamine + ATP + H2O = GMP + L-glutamate + AMP + diphosphate + 2 H(+). Its pathway is purine metabolism; GMP biosynthesis; GMP from XMP (L-Gln route): step 1/1. Functionally, catalyzes the synthesis of GMP from XMP. This Chromobacterium violaceum (strain ATCC 12472 / DSM 30191 / JCM 1249 / CCUG 213 / NBRC 12614 / NCIMB 9131 / NCTC 9757 / MK) protein is GMP synthase [glutamine-hydrolyzing].